The following is a 441-amino-acid chain: Putative F-box protein At1g33530 (441 aa).

The F-box domain maps to 91–137; that stretch reads TTLAVELPDVLVEEILQRLPVKYLVRLKSISKGWKSLIESDHLAEKH.

The protein is Putative F-box protein At1g33530 of Arabidopsis thaliana (Mouse-ear cress).